Reading from the N-terminus, the 139-residue chain is Small ribosomal subunit protein eS12 (139 aa).

It belongs to the eukaryotic ribosomal protein eS12 family. As to quaternary structure, subunit of the 40S ribosomal complex. Part of the small subunit (SSU) processome, composed of more than 70 proteins and the RNA chaperone small nucleolar RNA (snoRNA) U3.

It is found in the nucleus. Its subcellular location is the nucleolus. Functionally, subunit of the 40S ribosomal complex. Part of the small subunit (SSU) processome, first precursor of the small eukaryotic ribosomal subunit. During the assembly of the SSU processome in the nucleolus, many ribosome biogenesis factors, an RNA chaperone and ribosomal proteins associate with the nascent pre-rRNA and work in concert to generate RNA folding, modifications, rearrangements and cleavage as well as targeted degradation of pre-ribosomal RNA by the RNA exosome. In wing imaginal disks, might have a role in translation rate, growth and cell competition, probably through regulation of Xrp1 expression. Might have a role in development and longevity. The protein is Small ribosomal subunit protein eS12 of Drosophila melanogaster (Fruit fly).